The primary structure comprises 303 residues: Coenzyme PQQ synthesis protein B (303 aa).

The protein belongs to the PqqB family.

The protein operates within cofactor biosynthesis; pyrroloquinoline quinone biosynthesis. Its function is as follows. May be involved in the transport of PQQ or its precursor to the periplasm. This Rhizobium meliloti (strain 1021) (Ensifer meliloti) protein is Coenzyme PQQ synthesis protein B.